Here is a 257-residue protein sequence, read N- to C-terminus: Probable enoyl-CoA hydratase echA8 (257 aa).

Belongs to the enoyl-CoA hydratase/isomerase family.

The catalysed reaction is a (3S)-3-hydroxyacyl-CoA = a (2E)-enoyl-CoA + H2O. The enzyme catalyses a 4-saturated-(3S)-3-hydroxyacyl-CoA = a (3E)-enoyl-CoA + H2O. In terms of biological role, could possibly oxidize fatty acids using specific components. This is Probable enoyl-CoA hydratase echA8 (echA8) from Mycobacterium tuberculosis (strain CDC 1551 / Oshkosh).